We begin with the raw amino-acid sequence, 152 residues long: Perlwapin (152 aa).

Positions 1–18 (LILCVVVCTAAVLGTAAG) are cleaved as a signal peptide. A WAP 1 domain is found at 19-61 (YESQLPGCPPGAYPAICARYCYSDRDCASGYYCCNTGCLNICV). Disulfide bonds link C26/C52, C35/C56, C39/C51, C45/C60, C69/C95, C77/C100, C82/C94, C88/C103, C112/C139, C122/C142, C126/C138, and C132/C146. The region spanning 62–107 (PKPKPGLCPSITQSPCRGNVCNNDQDCPGNRKCCGKPGCKRCYRPK) is the WAP 2; atypical domain. In terms of domain architecture, WAP 3 spans 108–150 (KPGSCPARKYEAGPCVVYCDGDFDCPGDKKCCGGCPRLCEKPC).

As to expression, component of the acid-soluble and acid-insoluble organic matrix of prismatic shell layers (at protein level).

The protein localises to the secreted. Functionally, inhibits growth of calcium carbonate crystals. May inhibit growth of certain crystallographic planes in the mineral phase of nacre in the shell. The protein is Perlwapin of Haliotis asinina (Donkey's ear abalone).